A 431-amino-acid polypeptide reads, in one-letter code: Protein farnesyltransferase subunit beta (431 aa).

PFTB repeat units follow at residues 130–171 (KRKI…SLCD), 182–224 (RKGI…TLLN), 231–273 (TEGV…AILR), 280–322 (VEKL…AILE), and 332–375 (KHAL…AVAE). Residues 258-261 (HGGY) and 301-304 (RSNK) each bind (2E,6E)-farnesyl diphosphate. Zn(2+) is bound by residues aspartate 307 and cysteine 309. Position 310-313 (310-313 (YSFW)) interacts with (2E,6E)-farnesyl diphosphate. Histidine 363 serves as a coordination point for Zn(2+).

It belongs to the protein prenyltransferase subunit beta family. In terms of assembly, heterodimer of an alpha (RAM2) and a beta (RAM1) subunit. It depends on Zn(2+) as a cofactor.

It localises to the cytoplasm. It catalyses the reaction L-cysteinyl-[protein] + (2E,6E)-farnesyl diphosphate = S-(2E,6E)-farnesyl-L-cysteinyl-[protein] + diphosphate. In terms of biological role, catalyzes the transfer of a farnesyl moiety from farnesyl diphosphate to a cysteine at the fourth position from the C-terminus of several proteins having the C-terminal sequence Cys-aliphatic-aliphatic-X where X is Ser, Ala, Met, Cys, or Gln. Required for the membrane localization of proteins such as a-factor, Ras proteins and other membrane proteins containing the C-terminal CAAX motif. The beta subunit is responsible for isoprenoid and peptide-binding. The protein is Protein farnesyltransferase subunit beta of Saccharomyces cerevisiae (strain ATCC 204508 / S288c) (Baker's yeast).